Reading from the N-terminus, the 158-residue chain is NAD(P)H-quinone oxidoreductase subunit J, chloroplastic (158 aa).

The protein belongs to the complex I 30 kDa subunit family. NDH is composed of at least 16 different subunits, 5 of which are encoded in the nucleus.

Its subcellular location is the plastid. The protein localises to the chloroplast thylakoid membrane. It catalyses the reaction a plastoquinone + NADH + (n+1) H(+)(in) = a plastoquinol + NAD(+) + n H(+)(out). It carries out the reaction a plastoquinone + NADPH + (n+1) H(+)(in) = a plastoquinol + NADP(+) + n H(+)(out). Its function is as follows. NDH shuttles electrons from NAD(P)H:plastoquinone, via FMN and iron-sulfur (Fe-S) centers, to quinones in the photosynthetic chain and possibly in a chloroplast respiratory chain. The immediate electron acceptor for the enzyme in this species is believed to be plastoquinone. Couples the redox reaction to proton translocation, and thus conserves the redox energy in a proton gradient. The sequence is that of NAD(P)H-quinone oxidoreductase subunit J, chloroplastic from Amborella trichopoda.